Consider the following 181-residue polypeptide: Adenylate kinase (181 aa).

ATP is bound at residue glycine 10–threonine 15. The interval serine 30–valine 59 is NMP. AMP-binding positions include threonine 31, arginine 36, aspartate 57–valine 59, glycine 85–arginine 88, and glutamine 92. The tract at residues glycine 126–aspartate 132 is LID. Residue arginine 127 coordinates ATP. AMP contacts are provided by arginine 129 and arginine 140. Glycine 166 contributes to the ATP binding site.

It belongs to the adenylate kinase family. In terms of assembly, monomer.

It is found in the cytoplasm. It carries out the reaction AMP + ATP = 2 ADP. It functions in the pathway purine metabolism; AMP biosynthesis via salvage pathway; AMP from ADP: step 1/1. In terms of biological role, catalyzes the reversible transfer of the terminal phosphate group between ATP and AMP. Plays an important role in cellular energy homeostasis and in adenine nucleotide metabolism. In Mycobacterium tuberculosis (strain ATCC 25177 / H37Ra), this protein is Adenylate kinase.